The primary structure comprises 508 residues: Abl interactor 1 (508 aa).

Position 2 is an N-acetylalanine (alanine 2). A required for binding to WASF1 region spans residues 18 to 79 (ALIESYQNLT…NNVLQLLDIQ (62 aa)). Positions 45–107 (KALEETKAYT…DIHKEKVARR (63 aa)) constitute a t-SNARE coiled-coil homology domain. Tyrosine 53 carries the phosphotyrosine modification. 3 disordered regions span residues 159-290 (KHGN…APPL), 306-375 (APGS…LTPQ), and 388-421 (NIAD…PVDY). Over residues 161-175 (GNNQPARTGTLSRTN) the composition is skewed to polar residues. Threonine 174 and threonine 178 each carry phosphothreonine. Phosphoserine is present on residues serine 183 and serine 187. A Phosphotyrosine; by ABL1 modification is found at tyrosine 213. Threonine 215 bears the Phosphothreonine mark. A phosphoserine mark is found at serine 216, serine 222, and serine 225. A compositionally biased stretch (polar residues) spans 222–235 (SQHSPGRTASLNQR). A compositionally biased stretch (low complexity) spans 248–258 (SRENSGSSSIG). Over residues 278-290 (VPPPSGAPPAPPL) the composition is skewed to pro residues. Polar residues predominate over residues 307-322 (PGSQYGTMTRQISRHN). Phosphoserine is present on residues serine 319 and serine 323. Over residues 337-347 (PSVTAQFSAQP) the composition is skewed to polar residues. 2 stretches are compositionally biased toward pro residues: residues 393 to 403 (PTPPPPPPPDD) and 410 to 419 (SPPPPPPPPV). Residues 446–505 (NYIEKVVAIYDYTKDKDDELSFMEGAIIYVIKKNDDGWYEGVCNRVTGLFPGNYVESIMH) enclose the SH3 domain. A Phosphotyrosine modification is found at tyrosine 455. At serine 466 the chain carries Phosphoserine. Threonine 507 carries the post-translational modification Phosphothreonine.

It belongs to the ABI family. In terms of assembly, interacts with ABL1, ENAH, STX1A, SNAP25, VAMP2, EPS8, and through its N-terminus with WASF1. Part of a complex consisting of ABI1, STX1A and SNAP25. Part of a complex consisting of ABI1, EPS8 and SOS1. Interacts with SOS1, SOS2, GRB2, SPTA1 and the first SH3 domain of NCK1. Isoform 6 does not interact with NCK1. Component of the WAVE2 complex composed of ABI1, CYFIP1/SRA1, NCKAP1/NAP1 (NCKAP1l/HEM1 in hematopoietic cells) and WASF2/WAVE2. Interacts (via SH3 domain) with SHANK2 and SHANK3, but not SHANK1; the interaction is direct. Interacts with the heterodimer MYC:MAX; the interaction may enhance MYC:MAX transcriptional activity. Interacts with FNBP1L (via the SH3 domain), WASF2, and CDC42, but only in the presence of FNBP1L. (Microbial infection) Interacts with human cytomegalovirus/HHV-5 protein UL135. Post-translationally, phosphorylated on tyrosine residues after serum stimulation or induction by v-Abl. Seems to be phosphorylated at Tyr-53 by ABL1, required for nuclear but not for synaptic localization. Widely expressed, with highest expression in brain.

The protein resides in the cytoplasm. It localises to the nucleus. Its subcellular location is the cell projection. It is found in the lamellipodium. The protein localises to the filopodium. The protein resides in the growth cone. It localises to the postsynaptic density. Its subcellular location is the cytoskeleton. May act in negative regulation of cell growth and transformation by interacting with nonreceptor tyrosine kinases ABL1 and/or ABL2. May play a role in regulation of EGF-induced Erk pathway activation. Involved in cytoskeletal reorganization and EGFR signaling. Together with EPS8 participates in transduction of signals from Ras to Rac. In vitro, a trimeric complex of ABI1, EPS8 and SOS1 exhibits Rac specific guanine nucleotide exchange factor (GEF) activity and ABI1 seems to act as an adapter in the complex. Regulates ABL1/c-Abl-mediated phosphorylation of ENAH. Recruits WASF1 to lamellipodia and there seems to regulate WASF1 protein level. In brain, seems to regulate the dendritic outgrowth and branching as well as to determine the shape and number of synaptic contacts of developing neurons. This is Abl interactor 1 from Homo sapiens (Human).